We begin with the raw amino-acid sequence, 184 residues long: Gastrokine-1 (184 aa).

A signal peptide spans 1–20 (MKLTMFVVGLLGLLAAPGFA). Residues 54–148 (NNGWDSWNSL…MCRGIPTYVA (95 aa)) form the BRICHOS domain. Cys81 and Cys140 are joined by a disulfide.

The protein belongs to the gastrokine family. Expressed in the stomach. Highly expressed specifically in surface cells of the antrum mucosa from where it is secreted.

It is found in the secreted. Its subcellular location is the cytoplasmic granule. The protein localises to the golgi apparatus. Its function is as follows. Has mitogenic activity and may be involved in maintaining the integrity of the gastric mucosal epithelium. The chain is Gastrokine-1 (Gkn1) from Mus musculus (Mouse).